Reading from the N-terminus, the 640-residue chain is MSRTLTPLLDRICLPQDLRALPESDLVRLADELRTETIDAVSVTGGHLGAGLGVVELTVALHYVFNTPEDRIIWDVGHQTYPHKILTGRRDRIRTLRQEGGLSGFTKRSESVYDPFGAGHSSTSISAGLGMTVASALKAEKRRNIIAVIGDGAMSAGMAYEAMNNAGALDARLIVILNDNDMSIAPPTGAMSAHLARLVSRPAYRSLRERIKMFSKKMPKFFLDKARRSEEFARGFLVGGTLFDELGFYYVGPIDGHNLKHLLPVLKNVREYPNGPVLVHVVTHKGKGYAPAEASSDKYHGVNSFDVVTGKQIKTQSNALAYTKVFSKALIEEATHDNKIVGITAAMPTGTGLDAFAEKFPERMFDVGIAEQHAVTFAAGMACEGYKPFVAIYSTFLQRAYDQVIHDVSIQKLPVRFAIDRAGFVGADGATHAGSFDIVFLATLPEFVVMAPSDEVELMHMVRTAAAYDQGPISFRYPRGEGVGMDLPQRGELLEIGKGRVLREGSRVALVCFGTRMSEVLVAADALIAEGLSTTVADARFAKPLDKDLMRRLACEHEVLVAVEEGAIGGFGAHLLQFLAKEGLLEHGLKVRTLKFPDEYLNHGSPEKVLSRIGLDAVGIVNTVFTALGREIRTVQKVRV.

Thiamine diphosphate-binding positions include His-78 and 119 to 121 (GHS). Residue Asp-151 coordinates Mg(2+). Thiamine diphosphate is bound by residues 152–153 (GA), Asn-180, Tyr-289, and Glu-371. Asn-180 provides a ligand contact to Mg(2+).

It belongs to the transketolase family. DXPS subfamily. Homodimer. It depends on Mg(2+) as a cofactor. Thiamine diphosphate serves as cofactor.

It carries out the reaction D-glyceraldehyde 3-phosphate + pyruvate + H(+) = 1-deoxy-D-xylulose 5-phosphate + CO2. The protein operates within metabolic intermediate biosynthesis; 1-deoxy-D-xylulose 5-phosphate biosynthesis; 1-deoxy-D-xylulose 5-phosphate from D-glyceraldehyde 3-phosphate and pyruvate: step 1/1. Functionally, catalyzes the acyloin condensation reaction between C atoms 2 and 3 of pyruvate and glyceraldehyde 3-phosphate to yield 1-deoxy-D-xylulose-5-phosphate (DXP). This is 1-deoxy-D-xylulose-5-phosphate synthase from Bartonella quintana (strain Toulouse) (Rochalimaea quintana).